Consider the following 486-residue polypeptide: Photosystem II CP43 reaction center protein (486 aa).

Residues 1 to 28 (MKVFVHGWQHKISHTRILYSLRRFYHVE) constitute a propeptide that is removed on maturation. A run of 5 helical transmembrane segments spans residues 82 to 106 (LFEV…PHLA), 147 to 168 (LIGP…RDKN), 191 to 213 (KALF…RLIN), 268 to 288 (KPFA…LSYS), and 304 to 325 (WYNN…ASQA). E380 serves as a coordination point for [CaMn4O5] cluster. The chain crosses the membrane as a helical span at residues 460 to 484 (RARAAAAGFEKGINRENEAVLSMRP).

The protein belongs to the PsbB/PsbC family. PsbC subfamily. As to quaternary structure, PSII is composed of 1 copy each of membrane proteins PsbA, PsbB, PsbC, PsbD, PsbE, PsbF, PsbH, PsbI, PsbJ, PsbK, PsbL, PsbM, PsbT, PsbX, PsbY, PsbZ, Psb30/Ycf12, at least 3 peripheral proteins of the oxygen-evolving complex and a large number of cofactors. It forms dimeric complexes. Binds multiple chlorophylls and provides some of the ligands for the Ca-4Mn-5O cluster of the oxygen-evolving complex. It may also provide a ligand for a Cl- that is required for oxygen evolution. PSII binds additional chlorophylls, carotenoids and specific lipids. is required as a cofactor.

It is found in the plastid. It localises to the chloroplast thylakoid membrane. Its function is as follows. One of the components of the core complex of photosystem II (PSII). It binds chlorophyll and helps catalyze the primary light-induced photochemical processes of PSII. PSII is a light-driven water:plastoquinone oxidoreductase, using light energy to abstract electrons from H(2)O, generating O(2) and a proton gradient subsequently used for ATP formation. The polypeptide is Photosystem II CP43 reaction center protein (Gracilaria tenuistipitata var. liui (Red alga)).